Reading from the N-terminus, the 232-residue chain is Translation initiation factor IF-3 (232 aa).

Disordered regions lie at residues 1 to 21 and 184 to 232; these read MAIQ…RTNR and LQSQ…AAQR. Residues 193-208 are compositionally biased toward low complexity; it reads AAAAAAPAAAPAAGAP. A compositionally biased stretch (pro residues) spans 209-222; sequence APTPAPAPAAPAPA. Low complexity predominate over residues 223 to 232; that stretch reads PAAADPAAQR.

This sequence belongs to the IF-3 family. In terms of assembly, monomer.

It is found in the cytoplasm. IF-3 binds to the 30S ribosomal subunit and shifts the equilibrium between 70S ribosomes and their 50S and 30S subunits in favor of the free subunits, thus enhancing the availability of 30S subunits on which protein synthesis initiation begins. The sequence is that of Translation initiation factor IF-3 from Anaeromyxobacter sp. (strain K).